Consider the following 529-residue polypeptide: Zinc finger CCCH domain-containing protein 65 (529 aa).

Residues 1 to 10 show a composition bias toward basic and acidic residues; the sequence is MADADARAPP. Disordered stretches follow at residues 1-36 and 134-179; these read MADA…EDEV and PARK…GSYV. Positions 14 to 31 are enriched in low complexity; it reads PGATPIGSISPSSAAPAA. 3 C3H1-type zinc fingers span residues 108–136, 237–265, and 285–313; these read RPGE…HPAR, GSSQ…HRDG, and RPGE…HPDP. Residues 313-347 are disordered; sequence PSNVASKDPQLEHENGDAPQQDVQGSSSQPNASIW. The span at 333-344 shows a compositional bias: polar residues; the sequence is QDVQGSSSQPNA. 2 consecutive C3H1-type zinc fingers follow at residues 433 to 461 and 477 to 505; these read RPGQ…HPRS and KPDQ…HPFN.

This Oryza sativa subsp. japonica (Rice) protein is Zinc finger CCCH domain-containing protein 65.